Consider the following 238-residue polypeptide: Ubiquinone biosynthesis O-methyltransferase (238 aa).

Residues arginine 40, glycine 59, aspartate 81, and methionine 126 each coordinate S-adenosyl-L-methionine.

It belongs to the methyltransferase superfamily. UbiG/COQ3 family.

The catalysed reaction is a 3-demethylubiquinol + S-adenosyl-L-methionine = a ubiquinol + S-adenosyl-L-homocysteine + H(+). The enzyme catalyses a 3-(all-trans-polyprenyl)benzene-1,2-diol + S-adenosyl-L-methionine = a 2-methoxy-6-(all-trans-polyprenyl)phenol + S-adenosyl-L-homocysteine + H(+). It functions in the pathway cofactor biosynthesis; ubiquinone biosynthesis. Its function is as follows. O-methyltransferase that catalyzes the 2 O-methylation steps in the ubiquinone biosynthetic pathway. This is Ubiquinone biosynthesis O-methyltransferase from Neisseria meningitidis serogroup C (strain 053442).